Consider the following 154-residue polypeptide: CASP-like protein 5C2 (154 aa).

Residues 1–17 are Cytoplasmic-facing; sequence MEHVPGSFGTSASFALR. A helical transmembrane segment spans residues 18 to 38; it reads FGQTIFSAASLIFMCFDFDFY. Topologically, residues 39 to 41 are extracellular; that stretch reads DFT. The helical transmembrane segment at 42 to 62 threads the bilayer; the sequence is TFCYLAMVMAIVTPWSILLAL. Residues 63–81 are Cytoplasmic-facing; sequence TDTYSVLVKLLPQELRVLS. The helical transmembrane segment at 82-102 threads the bilayer; the sequence is IVFAGDFVLSFLSLGGACAVA. Residues 103–128 lie on the Extracellular side of the membrane; sequence SATELLASADGKICDGSLCIQYQVSA. Residues 129–149 form a helical membrane-spanning segment; the sequence is ALAFLCWFLLLASALFNFWSL. Over 150 to 154 the chain is Cytoplasmic; the sequence is PSLYY.

It belongs to the Casparian strip membrane proteins (CASP) family. As to quaternary structure, homodimer and heterodimers.

It localises to the cell membrane. In Arabidopsis thaliana (Mouse-ear cress), this protein is CASP-like protein 5C2.